Here is a 142-residue protein sequence, read N- to C-terminus: Large ribosomal subunit protein uL11 (142 aa).

This sequence belongs to the universal ribosomal protein uL11 family. As to quaternary structure, part of the ribosomal stalk of the 50S ribosomal subunit. Interacts with L10 and the large rRNA to form the base of the stalk. L10 forms an elongated spine to which L12 dimers bind in a sequential fashion forming a multimeric L10(L12)X complex. One or more lysine residues are methylated.

Forms part of the ribosomal stalk which helps the ribosome interact with GTP-bound translation factors. This Rhodopseudomonas palustris (strain BisA53) protein is Large ribosomal subunit protein uL11.